The sequence spans 304 residues: Capsid protein (304 aa).

2 stretches are compositionally biased toward basic and acidic residues: residues 1 to 24 (MGDS…REAR) and 32 to 54 (FEGK…EMSL). Residues 1–54 (MGDSTKKAETAKDVGTSQEKREARPLPTAADFEGKDTSEDTDGRAADADGEMSL) are disordered.

It belongs to the potexviruses coat protein family.

The protein resides in the virion. Functionally, required for genome encapsidation. Forms ribonucleoprotein complexes along with TGB1 helicase and viral RNA. The protein is Capsid protein of Potato virus M (strain German) (PVM).